A 334-amino-acid polypeptide reads, in one-letter code: D-alanine--D-alanine ligase (334 aa).

The ATP-grasp domain occupies 121-327; it reads KLWYDALDIP…FSEFLVQCVT (207 aa). Residue 151-206 coordinates ATP; that stretch reads AFGHWGSIFVKAARQGSSVGCYKVTTEDQIAPAIEAAFGFSEQVLVEQAVKPRELE. Mg(2+) contacts are provided by Asp281, Glu294, and Asn296.

It belongs to the D-alanine--D-alanine ligase family. It depends on Mg(2+) as a cofactor. Mn(2+) serves as cofactor.

The protein resides in the cytoplasm. The catalysed reaction is 2 D-alanine + ATP = D-alanyl-D-alanine + ADP + phosphate + H(+). It participates in cell wall biogenesis; peptidoglycan biosynthesis. In terms of biological role, cell wall formation. The chain is D-alanine--D-alanine ligase from Vibrio cholerae serotype O1 (strain ATCC 39315 / El Tor Inaba N16961).